Reading from the N-terminus, the 199-residue chain is 7-methyl-GTP pyrophosphatase (199 aa).

Catalysis depends on Asp73, which acts as the Proton acceptor.

This sequence belongs to the Maf family. YceF subfamily. Requires a divalent metal cation as cofactor.

The protein resides in the cytoplasm. The catalysed reaction is N(7)-methyl-GTP + H2O = N(7)-methyl-GMP + diphosphate + H(+). In terms of biological role, nucleoside triphosphate pyrophosphatase that hydrolyzes 7-methyl-GTP (m(7)GTP). May have a dual role in cell division arrest and in preventing the incorporation of modified nucleotides into cellular nucleic acids. The sequence is that of 7-methyl-GTP pyrophosphatase from Bordetella bronchiseptica (strain ATCC BAA-588 / NCTC 13252 / RB50) (Alcaligenes bronchisepticus).